A 190-amino-acid polypeptide reads, in one-letter code: Corticoliberin (190 aa).

Residues 1–24 (MRLPLLVSVGVLLVALLPSPPCRA) form the signal peptide. The propeptide occupies 25–147 (LLSRGPIPGA…QEAPAARKRR (123 aa)). Disordered regions lie at residues 33 to 53 (GARQ…LPQP) and 115 to 151 (PRRP…SQEP). Over residues 41-53 (PQPLSFFQPLPQP) the composition is skewed to low complexity. Alanine amide is present on A188.

This sequence belongs to the sauvagine/corticotropin-releasing factor/urotensin I family. As to quaternary structure, interacts (via C-terminus) with CRFR1 (via N-terminal extracellular domain). Produced by the hypothalamus.

It is found in the secreted. Its function is as follows. Hormone regulating the release of corticotropin from pituitary gland. Induces NLRP6 in intestinal epithelial cells, hence may influence gut microbiota profile. In Ovis aries (Sheep), this protein is Corticoliberin (CRH).